The following is a 559-amino-acid chain: Potassium-transporting ATPase potassium-binding subunit (559 aa).

13 helical membrane-spanning segments follow: residues 5-25 (GFLL…PLGS), 27-47 (LARL…RILW), 63-83 (LLAL…LLFW), 132-152 (GLTV…FALI), 170-190 (LVRI…LFFI), 253-273 (LAQM…FGEA), 283-303 (LLWA…WAEV), 327-347 (FGVL…CGAV), 356-376 (ALGG…FGGV), 379-399 (GLYG…LMIG), 416-436 (MTAL…ALAM), 484-504 (LLAF…MAIA), and 524-544 (GALF…LTFI).

It belongs to the KdpA family. The system is composed of three essential subunits: KdpA, KdpB and KdpC.

It is found in the cell inner membrane. Part of the high-affinity ATP-driven potassium transport (or Kdp) system, which catalyzes the hydrolysis of ATP coupled with the electrogenic transport of potassium into the cytoplasm. This subunit binds the periplasmic potassium ions and delivers the ions to the membrane domain of KdpB through an intramembrane tunnel. This Salmonella newport (strain SL254) protein is Potassium-transporting ATPase potassium-binding subunit.